Reading from the N-terminus, the 717-residue chain is Ubiquitin carboxyl-terminal hydrolase 11 (717 aa).

The disordered stretch occupies residues A231 to K268. Positions S242–S257 are enriched in low complexity. A compositionally biased stretch (basic and acidic residues) spans K258–K268. A USP domain is found at T298 to M707. C307 (nucleophile) is an active-site residue. The interval K531–N577 is disordered. Over residues S549–H564 the composition is skewed to basic residues. H649 serves as the catalytic Proton acceptor.

Belongs to the peptidase C19 family.

It catalyses the reaction Thiol-dependent hydrolysis of ester, thioester, amide, peptide and isopeptide bonds formed by the C-terminal Gly of ubiquitin (a 76-residue protein attached to proteins as an intracellular targeting signal).. The polypeptide is Ubiquitin carboxyl-terminal hydrolase 11 (UBP11) (Saccharomyces cerevisiae (strain ATCC 204508 / S288c) (Baker's yeast)).